The chain runs to 614 residues: Phosphomethylpyrimidine synthase (614 aa).

Substrate is bound by residues Asn-226, Met-255, Tyr-284, His-320, 340–342 (SRG), 381–384 (DGLR), and Glu-420. A Zn(2+)-binding site is contributed by His-424. Position 447 (Tyr-447) interacts with substrate. Position 488 (His-488) interacts with Zn(2+). [4Fe-4S] cluster contacts are provided by Cys-568, Cys-571, and Cys-576.

This sequence belongs to the ThiC family. In terms of assembly, homodimer. [4Fe-4S] cluster serves as cofactor.

The enzyme catalyses 5-amino-1-(5-phospho-beta-D-ribosyl)imidazole + S-adenosyl-L-methionine = 4-amino-2-methyl-5-(phosphooxymethyl)pyrimidine + CO + 5'-deoxyadenosine + formate + L-methionine + 3 H(+). Its pathway is cofactor biosynthesis; thiamine diphosphate biosynthesis. Functionally, catalyzes the synthesis of the hydroxymethylpyrimidine phosphate (HMP-P) moiety of thiamine from aminoimidazole ribotide (AIR) in a radical S-adenosyl-L-methionine (SAM)-dependent reaction. This chain is Phosphomethylpyrimidine synthase, found in Acidovorax sp. (strain JS42).